The chain runs to 207 residues: NAD(P)H-quinone oxidoreductase subunit K, chloroplastic (207 aa).

Residues cysteine 47, cysteine 48, cysteine 112, and cysteine 143 each coordinate [4Fe-4S] cluster.

It belongs to the complex I 20 kDa subunit family. NDH is composed of at least 16 different subunits, 5 of which are encoded in the nucleus. The cofactor is [4Fe-4S] cluster.

It is found in the plastid. Its subcellular location is the chloroplast thylakoid membrane. The enzyme catalyses a plastoquinone + NADH + (n+1) H(+)(in) = a plastoquinol + NAD(+) + n H(+)(out). The catalysed reaction is a plastoquinone + NADPH + (n+1) H(+)(in) = a plastoquinol + NADP(+) + n H(+)(out). Its function is as follows. NDH shuttles electrons from NAD(P)H:plastoquinone, via FMN and iron-sulfur (Fe-S) centers, to quinones in the photosynthetic chain and possibly in a chloroplast respiratory chain. The immediate electron acceptor for the enzyme in this species is believed to be plastoquinone. Couples the redox reaction to proton translocation, and thus conserves the redox energy in a proton gradient. The chain is NAD(P)H-quinone oxidoreductase subunit K, chloroplastic from Psilotum nudum (Whisk fern).